Here is a 210-residue protein sequence, read N- to C-terminus: Large ribosomal subunit protein bL25 (210 aa).

A disordered region spans residues 185–210 (APEPAGQPEVPPEPAEEAKAKTIEKE). Residues 200–210 (EEAKAKTIEKE) show a composition bias toward basic and acidic residues.

Belongs to the bacterial ribosomal protein bL25 family. CTC subfamily. In terms of assembly, part of the 50S ribosomal subunit; part of the 5S rRNA/L5/L18/L25 subcomplex. Contacts the 5S rRNA. Binds to the 5S rRNA independently of L5 and L18.

This is one of the proteins that binds to the 5S RNA in the ribosome where it forms part of the central protuberance. This Desulforamulus reducens (strain ATCC BAA-1160 / DSM 100696 / MI-1) (Desulfotomaculum reducens) protein is Large ribosomal subunit protein bL25.